Consider the following 244-residue polypeptide: Lectin (244 aa).

The segment at threonine 1–lysine 20 is disordered.

Belongs to the leguminous lectin family. In terms of assembly, homodimer. In contrast to other Lathyrus lectins which are tetramer of two alpha and two beta chains.

The polypeptide is Lectin (Lathyrus sphaericus (Spring vetchling)).